Here is a 177-residue protein sequence, read N- to C-terminus: Putative 3-methyladenine DNA glycosylase (177 aa).

The protein belongs to the DNA glycosylase MPG family.

The polypeptide is Putative 3-methyladenine DNA glycosylase (Rickettsia felis (strain ATCC VR-1525 / URRWXCal2) (Rickettsia azadi)).